We begin with the raw amino-acid sequence, 504 residues long: Protein Dok-7 (504 aa).

Residues 4-109 (AALVEGQVKL…WDTRIRYALG (106 aa)) enclose the PH domain. The IRS-type PTB domain occupies 105–210 (RYALGEVHRF…RGISPTKGPF (106 aa)). 3 disordered regions span residues 210 to 232 (FGLR…ERVA), 248 to 348 (LSHS…HSSY), and 371 to 483 (SLLS…PHAG). Positions 263–280 (LSSSSSEASHSDISASSR) are enriched in low complexity. Composition is skewed to polar residues over residues 285–297 (PEQS…TSQE), 331–341 (GRQSSSDSGIA), and 421–430 (PASQGSSDHG).

Homodimer. Forms a heterotetramer composed of 2 DOK7 and 2 MUSK molecules which facilitates MUSK trans-autophosphorylation on tyrosine residue and activation. Interacts (via IRS-type PTB domain) with MUSK (via cytoplasmic part); requires MUSK phosphorylation.

The protein localises to the cell membrane. Its subcellular location is the synapse. Probable muscle-intrinsic activator of MUSK that plays an essential role in neuromuscular synaptogenesis. Acts in aneural activation of MUSK and subsequent acetylcholine receptor (AchR) clustering in myotubes. Induces autophosphorylation of MUSK. This chain is Protein Dok-7 (Dok7), found in Mus musculus (Mouse).